The sequence spans 391 residues: MVMFKKIKSFEVVFNDPEKVYGSGEKVAGRVIVEVCEVTRVKAVRILACGVAKVLWMQGSQQCKQTSEYLRYEDTLLLEDQPTGENEMVIMRPGNKYEYKFGFELPQGPLGTSFKGKYGCVDYWVKAFLDRPSQPTQGTKKNFEVVDLVDVNTPDLMAPVSAKKEKKVSCMFIPDGRVSVSARIDRKGFCEGDEISIHADFENTCSRIVVPKAAIVARHTYLANGQTKVLTQELSSVRGNHIISGTCASWRGKSLRVQKIRPSILGCNILRVEYSLLIYVSVPGSKKVILDLPLVIGSRSGLSSRTSSMASRTSSEMSWVDLNIPDTPEAPPCYMDIIPEDHRLESPTTPLLDDMDGSQDSPIFMYAPEFKFMPPPTYTEVDPCILNNNVQ.

Residue K212 forms a Glycyl lysine isopeptide (Lys-Gly) (interchain with G-Cter in ubiquitin) linkage. At S361 the chain carries Phosphoserine.

Belongs to the arrestin family. As to quaternary structure, homodimer; disulfide-linked. Interacts with TXN/thioredoxin through its redox-active site. Interacts with transcriptional repressors ZBTB16, ZBTB32 and HDAC1. Interacts with DDIT4. Post-translationally, ubiquitinated; undergoes heterotypic 'Lys-48'-/'Lys-63'-branched polyubiquitination catalyzed by ITCH and UBR5 resulting in proteasomal degradation. Deubiquitinated by USP5, leading to TXNIP stabilization.

The protein localises to the cytoplasm. In terms of biological role, may act as an oxidative stress mediator by inhibiting thioredoxin activity or by limiting its bioavailability. Interacts with COPS5 and restores COPS5-induced suppression of CDKN1B stability, blocking the COPS5-mediated translocation of CDKN1B from the nucleus to the cytoplasm. Functions as a transcriptional repressor, possibly by acting as a bridge molecule between transcription factors and corepressor complexes, and over-expression will induce G0/G1 cell cycle arrest. Required for the maturation of natural killer cells. Acts as a suppressor of tumor cell growth. Inhibits the proteasomal degradation of DDIT4, and thereby contributes to the inhibition of the mammalian target of rapamycin complex 1 (mTORC1). The chain is Thioredoxin-interacting protein (TXNIP) from Pongo abelii (Sumatran orangutan).